The following is a 182-amino-acid chain: MQMDWLFIAVISGIGLLSSGVPGTQGAYTTEQCRALNGSCNFYACFPKNVIIGKCDWWGWSCCARTPLERCTAKKGTCTKTGCTKTDTDHGPCDGGAQCCQRDPVKYCKFHGNVCGRGKCPMDHIPIGECTPGYPCCKRDGPAYCKSKGGKCLNRCPQIVPTNVIGVCATGVPCCKSRQSTG.

The first 26 residues, 1–26 (MQMDWLFIAVISGIGLLSSGVPGTQG), serve as a signal peptide directing secretion. Residues 27-64 (AYTTEQCRALNGSCNFYACFPKNVIIGKCDWWGWSCCA) form a C(6)C(4)C(9)C(6)CC 1; approximate repeat. One copy of the C(6)C(4)C(9)C(6)CC 2; approximate repeat lies at 65-101 (RTPLERCTAKKGTCTKTGCTKTDTDHGPCDGGAQCCQ). Residues 102–138 (RDPVKYCKFHGNVCGRGKCPMDHIPIGECTPGYPCCK) form a C(6)C(4)C(9)C(6)CC 3; approximate repeat. The C(6)C(4)C(9)C(6)CC 4; approximate repeat unit spans residues 139–176 (RDGPAYCKSKGGKCLNRCPQIVPTNVIGVCATGVPCCK).

The protein belongs to the beta-defensin family. Helofensin subfamily. As to expression, expressed by the mandibular venom gland.

The protein localises to the secreted. Functionally, lethal toxin which possesses an inhibitory effect on direct electrical stimulation of the isolated hemi-diaphragm of mice. Neither hemorrhagic nor hemolytic activities are detected. Phospholipase A2 activity, proteolytic activity and arginine esterolytic activity are absent. In Heloderma suspectum cinctum (Banded Gila monster), this protein is Helofensin-3.